Here is a 286-residue protein sequence, read N- to C-terminus: Probable endonuclease 4 (286 aa).

Residues His-71, His-111, Glu-147, Asp-181, His-184, His-218, Asp-231, His-233, and Glu-263 each coordinate Zn(2+).

It belongs to the AP endonuclease 2 family. Zn(2+) is required as a cofactor.

The catalysed reaction is Endonucleolytic cleavage to 5'-phosphooligonucleotide end-products.. Endonuclease IV plays a role in DNA repair. It cleaves phosphodiester bonds at apurinic or apyrimidinic (AP) sites, generating a 3'-hydroxyl group and a 5'-terminal sugar phosphate. The sequence is that of Probable endonuclease 4 from Vibrio cholerae serotype O1 (strain ATCC 39541 / Classical Ogawa 395 / O395).